Reading from the N-terminus, the 239-residue chain is Pyridoxine 5'-phosphate synthase (239 aa).

3-amino-2-oxopropyl phosphate is bound at residue Asn-9. Position 11–12 (11–12 (DH)) interacts with 1-deoxy-D-xylulose 5-phosphate. A 3-amino-2-oxopropyl phosphate-binding site is contributed by Arg-20. The active-site Proton acceptor is His-45. Arg-47 and His-52 together coordinate 1-deoxy-D-xylulose 5-phosphate. Glu-72 serves as the catalytic Proton acceptor. Residue Thr-102 coordinates 1-deoxy-D-xylulose 5-phosphate. His-189 functions as the Proton donor in the catalytic mechanism. 3-amino-2-oxopropyl phosphate contacts are provided by residues Gly-190 and 211–212 (GH).

It belongs to the PNP synthase family. Homooctamer; tetramer of dimers.

The protein resides in the cytoplasm. The catalysed reaction is 3-amino-2-oxopropyl phosphate + 1-deoxy-D-xylulose 5-phosphate = pyridoxine 5'-phosphate + phosphate + 2 H2O + H(+). The protein operates within cofactor biosynthesis; pyridoxine 5'-phosphate biosynthesis; pyridoxine 5'-phosphate from D-erythrose 4-phosphate: step 5/5. In terms of biological role, catalyzes the complicated ring closure reaction between the two acyclic compounds 1-deoxy-D-xylulose-5-phosphate (DXP) and 3-amino-2-oxopropyl phosphate (1-amino-acetone-3-phosphate or AAP) to form pyridoxine 5'-phosphate (PNP) and inorganic phosphate. This is Pyridoxine 5'-phosphate synthase from Ehrlichia chaffeensis (strain ATCC CRL-10679 / Arkansas).